The sequence spans 2325 residues: Protein sidekick homolog (2325 aa).

An N-terminal signal peptide occupies residues 1–26 (MRNRLLLIFYTTTVLWTIGYTQLVLG). The Extracellular segment spans residues 27–2019 (KPPIFQDGGS…IPDDPFYTTW (1993 aa)). 3 Ig-like C2-type domains span residues 28 to 105 (PPIF…AAIS), 217 to 319 (PSLQ…AYMT), and 324 to 397 (PILK…ADLA). Disulfide bonds link Cys-52/Cys-94, Cys-247/Cys-301, and Cys-345/Cys-386. Asn-407 carries an N-linked (GlcNAc...) asparagine glycan. Ig-like C2-type domains lie at 456–544 (PSQK…VQVN) and 547–638 (SLIE…AMLQ). 2 disulfides stabilise this stretch: Cys-480–Cys-528 and Cys-568–Cys-622. 6 N-linked (GlcNAc...) asparagine glycosylation sites follow: Asn-632, Asn-655, Asn-807, Asn-868, Asn-932, and Asn-1016. Fibronectin type-III domains follow at residues 645-751 (MPER…MPQQ), 756-853 (APRN…TSEG), 858-957 (APKN…TEED), 961-1055 (SVDE…VPPE), 1059-1154 (RPSM…TLQT), 1159-1254 (PSQR…TYES), 1259-1359 (SPRN…TMED), 1363-1457 (PPES…SSVR), 1463-1566 (APAP…TLPS), 1571-1671 (QPIS…VGYS), 1673-1775 (PKRN…DKPG), 1776-1872 (PVGI…SKDG), and 1873-2004 (PPPP…TEQL). Positions 1036–1059 (TRKGDGPVEETKFESGVPPELPGR) are disordered. The segment covering 1037 to 1048 (RKGDGPVEETKF) has biased composition (basic and acidic residues). A glycan (N-linked (GlcNAc...) asparagine) is linked at Asn-1107. Positions 1137-1161 (KGRGAPSEPSRSFETLQTNPDTPSQ) are disordered. Residues 1145-1161 (PSRSFETLQTNPDTPSQ) are compositionally biased toward polar residues. The N-linked (GlcNAc...) asparagine glycan is linked to Asn-1614. 2 disordered regions span residues 1857–1884 (GEQR…ITSG) and 1918–1947 (PANG…ATST). Asn-1863 carries an N-linked (GlcNAc...) asparagine glycan. Low complexity predominate over residues 1935–1947 (AKSAAQTAAATST). The helical transmembrane segment at 2020–2040 (WFMALVAMGAFVLIVIIIAIL) threads the bilayer. The Cytoplasmic portion of the chain corresponds to 2041–2325 (CVTGSSAKYR…NLTTGFSSFV (285 aa)). Disordered regions lie at residues 2080-2113 (NMTR…SVLG), 2164-2187 (TAYV…PTRS), 2202-2226 (RGHI…LQQP), and 2285-2325 (ILTG…SSFV). Over residues 2091 to 2100 (PGTTQSWVSD) the composition is skewed to polar residues. A compositionally biased stretch (low complexity) spans 2215-2226 (GSQPQGSPLQQP). Composition is skewed to polar residues over residues 2294 to 2305 (AGRSSTTDSTSE) and 2313 to 2325 (ATPN…SSFV).

The protein belongs to the sidekick family.

The protein localises to the membrane. Functionally, cell adhesion protein. This chain is Protein sidekick homolog (rig-4), found in Caenorhabditis elegans.